The sequence spans 347 residues: MSALTPASEVMLRHSDEFIERRVLFAGDLQDALPAQFEAADVRVHTQQYHHWQLLNRAMGDNVQYGLTVDAAFVAECDTLIYYWPKSKQEAQFQLCNILALLPVGTDVFVVGENRSGVRSADQMVEDYATLVKIDSARRCGLYHGRLDTQTEFNLEDWWESYQLHDLEVKTLPGVFSRDGLDVGSSLLLSTLDKHMKGKVLDVGCGAGVMASVLSKLSPKMKLTLSDVNAAAIESSRATLAANGIEGEVIVSNVYSDITGRFDLIISNPPFHDGLQTSLTAAETLIRGALKHLGVGGKLRIVANAFLPYPDILDATFGSHEVLAQNGRFKVYQATVARAPRDAKKKK.

It belongs to the methyltransferase superfamily. RsmC family. Monomer.

It is found in the cytoplasm. The enzyme catalyses guanosine(1207) in 16S rRNA + S-adenosyl-L-methionine = N(2)-methylguanosine(1207) in 16S rRNA + S-adenosyl-L-homocysteine + H(+). In terms of biological role, specifically methylates the guanine in position 1207 of 16S rRNA in the 30S particle. This Serratia proteamaculans (strain 568) protein is Ribosomal RNA small subunit methyltransferase C.